The following is a 376-amino-acid chain: Putative glutamate--cysteine ligase 2-1 (376 aa).

This sequence belongs to the glutamate--cysteine ligase type 2 family. YbdK subfamily.

It carries out the reaction L-cysteine + L-glutamate + ATP = gamma-L-glutamyl-L-cysteine + ADP + phosphate + H(+). In terms of biological role, ATP-dependent carboxylate-amine ligase which exhibits weak glutamate--cysteine ligase activity. In Rubrobacter xylanophilus (strain DSM 9941 / JCM 11954 / NBRC 16129 / PRD-1), this protein is Putative glutamate--cysteine ligase 2-1.